Here is a 406-residue protein sequence, read N- to C-terminus: Glucose-1-phosphate adenylyltransferase (406 aa).

Alpha-D-glucose 1-phosphate is bound by residues Tyr100, Gly165, 181-182 (EK), and Ser199.

This sequence belongs to the bacterial/plant glucose-1-phosphate adenylyltransferase family. In terms of assembly, homotetramer.

The catalysed reaction is alpha-D-glucose 1-phosphate + ATP + H(+) = ADP-alpha-D-glucose + diphosphate. Its pathway is glycan biosynthesis; glycogen biosynthesis. Involved in the biosynthesis of ADP-glucose, a building block required for the elongation reactions to produce glycogen. Catalyzes the reaction between ATP and alpha-D-glucose 1-phosphate (G1P) to produce pyrophosphate and ADP-Glc. The protein is Glucose-1-phosphate adenylyltransferase of Streptomyces avermitilis (strain ATCC 31267 / DSM 46492 / JCM 5070 / NBRC 14893 / NCIMB 12804 / NRRL 8165 / MA-4680).